The primary structure comprises 120 residues: Aspartate 1-decarboxylase (120 aa).

Ser25 functions as the Schiff-base intermediate with substrate; via pyruvic acid in the catalytic mechanism. Ser25 is modified (pyruvic acid (Ser)). Thr57 contacts substrate. Catalysis depends on Tyr58, which acts as the Proton donor. 73–75 provides a ligand contact to substrate; it reads GAA.

Belongs to the PanD family. As to quaternary structure, heterooctamer of four alpha and four beta subunits. Pyruvate is required as a cofactor. Post-translationally, is synthesized initially as an inactive proenzyme, which is activated by self-cleavage at a specific serine bond to produce a beta-subunit with a hydroxyl group at its C-terminus and an alpha-subunit with a pyruvoyl group at its N-terminus.

The protein localises to the cytoplasm. It carries out the reaction L-aspartate + H(+) = beta-alanine + CO2. The protein operates within cofactor biosynthesis; (R)-pantothenate biosynthesis; beta-alanine from L-aspartate: step 1/1. Functionally, catalyzes the pyruvoyl-dependent decarboxylation of aspartate to produce beta-alanine. This is Aspartate 1-decarboxylase from Thermus thermophilus (strain ATCC 27634 / DSM 579 / HB8).